The chain runs to 675 residues: DNA ligase (675 aa).

NAD(+) contacts are provided by residues 32–36 (DAEYD), 81–82 (SL), and glutamate 113. The active-site N6-AMP-lysine intermediate is lysine 115. 4 residues coordinate NAD(+): arginine 136, glutamate 173, lysine 291, and lysine 315. Cysteine 409, cysteine 412, cysteine 427, and cysteine 433 together coordinate Zn(2+). The region spanning 595 to 675 (SEKTYFFNKK…ELNSLIRIKE (81 aa)) is the BRCT domain.

The protein belongs to the NAD-dependent DNA ligase family. LigA subfamily. Mg(2+) is required as a cofactor. The cofactor is Mn(2+).

It carries out the reaction NAD(+) + (deoxyribonucleotide)n-3'-hydroxyl + 5'-phospho-(deoxyribonucleotide)m = (deoxyribonucleotide)n+m + AMP + beta-nicotinamide D-nucleotide.. Its function is as follows. DNA ligase that catalyzes the formation of phosphodiester linkages between 5'-phosphoryl and 3'-hydroxyl groups in double-stranded DNA using NAD as a coenzyme and as the energy source for the reaction. It is essential for DNA replication and repair of damaged DNA. This Buchnera aphidicola subsp. Acyrthosiphon pisum (strain APS) (Acyrthosiphon pisum symbiotic bacterium) protein is DNA ligase.